The sequence spans 328 residues: MIEKIWSGESPLWRLLLPLSWLYGLVSGAIRLCYKLKLKRAWRAPVPVVVVGNLTAGGNGKTPVVVWLVEQLQQRGIRVGVVSRGYGSKAESYPLLLSADTTTAQAGDEPVLIYQRTDAPVAVSPVRSDAVKAILAQHPDVQIIVTDDGLQHYRLARDVEIVVIDGVRRFGNGWWLPAGPMRERAGRLKSVDAVIVNGGVPRSGEIPMHLLPGQAVNLRTGTRCDVAQLEHVVAMAGIGHPPRFFATLKMCGVQPEKCVPLADHQSLNHADVSASVSAEQTLVMTEKDAVKCRAFAEENWWYLPVDAQLSGDEPAKLLTQLTSLASGN.

Position 55–62 (55–62) interacts with ATP; it reads TAGGNGKT.

The protein belongs to the LpxK family.

It carries out the reaction a lipid A disaccharide + ATP = a lipid IVA + ADP + H(+). It participates in glycolipid biosynthesis; lipid IV(A) biosynthesis; lipid IV(A) from (3R)-3-hydroxytetradecanoyl-[acyl-carrier-protein] and UDP-N-acetyl-alpha-D-glucosamine: step 6/6. Transfers the gamma-phosphate of ATP to the 4'-position of a tetraacyldisaccharide 1-phosphate intermediate (termed DS-1-P) to form tetraacyldisaccharide 1,4'-bis-phosphate (lipid IVA). In Shigella boydii serotype 4 (strain Sb227), this protein is Tetraacyldisaccharide 4'-kinase.